We begin with the raw amino-acid sequence, 249 residues long: ATP synthase subunits region ORF 6 (249 aa).

This is ATP synthase subunits region ORF 6 from Fuscovulum blasticum (Rhodobacter blasticus).